Consider the following 409-residue polypeptide: MAEASVDLGTGDNLEQKILQVLSDAGSPVQIDQLLKKLQVPKKILNQVLYRLKKEGRVSSPAPATWSLGGDGASGDGAPEIPEDSAAQPSLEERILRFLETKGPQRALHIAKALGMTTAKEVNPILYSMRNKHLLTVSDTQMWTIYRSSQEGQERACSGVGQESPAVIYQQNPINMICQQGPNSLISISNSKAIQIGHGNVMSRQTICGDPGPGTPHHAPLPVLEDAAAQDTPPGTHGAQLIHLNKSMLRRVQLGHGNEMNLERDPVEHPIFSFSSSPPESTTTADPETAFNMQTPEPGPHPEGGTTQIVHIKSCLLEDTTVGNNNKMTIHRRSKGGTKESADSQELKEDTGASSEATPPRSCLHTPSDSTLLTSELTAMALGDGSPQITESMLREDEVQAAETCQTQD.

Z-binding domains follow at residues 8–70 and 85–147; these read LGTG…SLGG and SAAQ…TIYR. Glycyl lysine isopeptide (Lys-Gly) (interchain with G-Cter in ubiquitin) cross-links involve residues Lys-17 and Lys-43. Positions 59–87 are disordered; sequence SSPAPATWSLGGDGASGDGAPEIPEDSAA. Short sequence motifs (RIP homotypic interaction motif (RHIM)) lie at residues 183-207 and 241-265; these read NSLI…RQTI and LIHL…LERD. 2 disordered regions span residues 269 to 307 and 323 to 369; these read HPIF…GGTT and GNNN…TPSD. Residues 270–290 are compositionally biased toward low complexity; it reads PIFSFSSSPPESTTTADPETA. Residues 337-351 show a composition bias toward basic and acidic residues; sequence GTKESADSQELKEDT.

As to quaternary structure, homodimer. Interacts (via RIP homotypic interaction motif) with RIPK3; leading to RIPK3 activation and necroptosis; interaction is enhanced by CASP6. Interacts (via RIP homotypic interaction motif) with RIPK1. Component of the AIM2 PANoptosome complex, a multiprotein complex that drives inflammatory cell death (PANoptosis). Post-translationally, ubiquitinated; polyubiquitinated following influenza A virus (IAV) infection. In terms of processing, phosphorylated.

The protein resides in the cytoplasm. It is found in the nucleus. With respect to regulation, ZBP1-dependent necroptosis is normally inhibited by RIPK1: RIPK1 inhibits the ZBP1-induced activation of RIPK3 via FADD-mediated recruitment of CASP8, which cleaves RIPK1 and limits TNF-induced necroptosis. Functionally, key innate sensor that recognizes and binds Z-RNA structures, which are produced by a number of viruses, such as herpesvirus, orthomyxovirus or flavivirus, and triggers different forms of cell death. ZBP1 acts as an essential mediator of pyroptosis, necroptosis and apoptosis (PANoptosis), an integral part of host defense against pathogens, by activating RIPK3, caspase-8 (CASP8), and the NLRP3 inflammasome. Key activator of necroptosis, a programmed cell death process in response to death-inducing TNF-alpha family members, via its ability to bind Z-RNA: once activated upon Z-RNA-binding, ZBP1 interacts and stimulates RIPK3 kinase, which phosphorylates and activates MLKL, triggering execution of programmed necrosis. In addition to TNF-induced necroptosis, necroptosis can also take place in the nucleus in response to orthomyxoviruses infection: ZBP1 recognizes and binds Z-RNA structures that are produced in infected nuclei by orthomyxoviruses, such as the influenza A virus (IAV), leading to ZBP1 activation, RIPK3 stimulation and subsequent MLKL phosphorylation, triggering disruption of the nuclear envelope and leakage of cellular DNA into the cytosol. ZBP1-dependent cell death in response to IAV infection promotes interleukin-1 alpha (IL1A) induction in an NLRP3-inflammasome-independent manner: IL1A expression is required for the optimal interleukin-1 beta (IL1B) production, and together, these cytokines promote infiltration of inflammatory neutrophils to the lung, leading to the formation of neutrophil extracellular traps. In addition to its direct role in driving necroptosis via its ability to sense Z-RNAs, also involved in PANoptosis triggered in response to bacterial infection: component of the AIM2 PANoptosome complex, a multiprotein complex that triggers PANoptosis. Also acts as the apical sensor of fungal infection responsible for activating PANoptosis. Involved in CASP8-mediated cell death via its interaction with RIPK1 but independently of its ability to sense Z-RNAs. In some cell types, also able to restrict viral replication by promoting cell death-independent responses. In response to flavivirus infection in neurons, promotes a cell death-independent pathway that restricts viral replication: together with RIPK3, promotes a death-independent transcriptional program that modifies the cellular metabolism via up-regulation expression of the enzyme ACOD1/IRG1 and production of the metabolite itaconate. Itaconate inhibits the activity of succinate dehydrogenase, generating a metabolic state in neurons that suppresses replication of viral genomes. The protein is Z-DNA-binding protein 1 of Rattus norvegicus (Rat).